The primary structure comprises 568 residues: Urease subunit alpha (568 aa).

Positions 134, 136, and 217 each coordinate Ni(2+). Lysine 217 carries the N6-carboxylysine modification. Substrate is bound at residue histidine 219. Ni(2+) is bound by residues histidine 246 and histidine 272. Catalysis depends on histidine 320, which acts as the Proton donor. Residue aspartate 360 participates in Ni(2+) binding.

It belongs to the metallo-dependent hydrolases superfamily. Urease alpha subunit family. Heterotrimer of UreA (gamma), UreB (beta) and UreC (alpha) subunits. Three heterotrimers associate to form the active enzyme. The cofactor is Ni cation. Post-translationally, carboxylation allows a single lysine to coordinate two nickel ions.

The protein resides in the cytoplasm. It carries out the reaction urea + 2 H2O + H(+) = hydrogencarbonate + 2 NH4(+). Its pathway is nitrogen metabolism; urea degradation; CO(2) and NH(3) from urea (urease route): step 1/1. This chain is Urease subunit alpha, found in Marinomonas sp. (strain MWYL1).